The primary structure comprises 300 residues: Meiosis-specific cyclin crs1 (300 aa).

In terms of domain architecture, Cyclin N-terminal spans 61–183 (IIEQEKKGLT…VLALLNFDIY (123 aa)).

Belongs to the cyclin family. Cyclin AB subfamily.

It is found in the cytoplasm. It localises to the nucleus. Functionally, has a role in meiotic chromosome segregation. The sequence is that of Meiosis-specific cyclin crs1 (crs1) from Schizosaccharomyces pombe (strain 972 / ATCC 24843) (Fission yeast).